The following is a 478-amino-acid chain: ATP synthase subunit beta (478 aa).

Residue glycine 163–threonine 170 coordinates ATP.

This sequence belongs to the ATPase alpha/beta chains family. In terms of assembly, F-type ATPases have 2 components, CF(1) - the catalytic core - and CF(0) - the membrane proton channel. CF(1) has five subunits: alpha(3), beta(3), gamma(1), delta(1), epsilon(1). CF(0) has three main subunits: a(1), b(2) and c(9-12). The alpha and beta chains form an alternating ring which encloses part of the gamma chain. CF(1) is attached to CF(0) by a central stalk formed by the gamma and epsilon chains, while a peripheral stalk is formed by the delta and b chains.

The protein resides in the cell inner membrane. It catalyses the reaction ATP + H2O + 4 H(+)(in) = ADP + phosphate + 5 H(+)(out). Functionally, produces ATP from ADP in the presence of a proton gradient across the membrane. The catalytic sites are hosted primarily by the beta subunits. The polypeptide is ATP synthase subunit beta (Aquifex pyrophilus).